We begin with the raw amino-acid sequence, 125 residues long: Small ribosomal subunit protein uS12m (125 aa).

Residues Met1–Leu26 are disordered. Positions Leu8–Lys23 are enriched in basic residues.

The protein belongs to the universal ribosomal protein uS12 family.

The protein resides in the mitochondrion. The polypeptide is Small ribosomal subunit protein uS12m (RPS12) (Prototheca wickerhamii).